Consider the following 587-residue polypeptide: MKREHHHLHPRPDPPSMAAAPNGDTYLNTGKAKLWEEDAQLDGGMDELLAVLGYKVKSSDMAEVAQKLEQLEEAMCQVQDTGLSHLAFDTVHYNPSDLSTWLESMITELHPPPSFPQPHPSQMNDSSFLAPAESSTITSIDYDPQRQTSSLIFEESSSSDYDLKAITSSAIYSPRENKRLKPSSESDSDLFSTSAIGASNSATRPIVLVDSQENGIQLVHALMACAEAVQQNNLNLAEALEKRIGYLAVSQAGAMRKVATFFAEALARRIYRVCPENPLDHSMSDMLQLHFYESSPYLKFAHFTANQAILEAFEGKKRVHVIDFSMNQGMQWPALLQALALRPSGPPAFRLTGIGPPAPDNSDYLQDVGWKLAKLVETINVEFEYRGFVANSLADLDASMLELRPSEVESVVVNSVFELHKLLARPGAIEKVMSVVKQMKPEIMTVVEQEANHNGPVFMDRFTESLHYYSTLFDSLESSPNNQDKMMSEMYLGKQICNVVACEGSDRVEWHETLTQWRTRLCSSGFEPIHLGSNAFKQASMLLALFGSGEGYRVEENNGSLTLGWHTRPLIVTSAWKLGNNSVVVTH.

A disordered region spans residues 1-23 (MKREHHHLHPRPDPPSMAAAPNG). The DELLA motif motif lies at 46-50 (DELLA). Positions 209–577 (VDSQENGIQL…RPLIVTSAWK (369 aa)) constitute a GRAS domain. The leucine repeat I (LRI) stretch occupies residues 216-270 (IQLVHALMACAEAVQQNNLNLAEALEKRIGYLAVSQAGAMRKVATFFAEALARRI). A VHIID region spans residues 288–353 (QLHFYESSPY…SGPPAFRLTG (66 aa)). A VHIID motif is present at residues 319 to 323 (VHVID). The leucine repeat II (LRII) stretch occupies residues 367-399 (DVGWKLAKLVETINVEFEYRGFVANSLADLDAS). The tract at residues 411–498 (VVVNSVFELH…EMYLGKQICN (88 aa)) is PFYRE. Positions 419 to 423 (LHKLL) match the LXXLL motif motif. The segment at 501–577 (ACEGSDRVEW…RPLIVTSAWK (77 aa)) is SAW.

The protein belongs to the GRAS family. DELLA subfamily. Phosphorylated. Post-translationally, ubiquitinated. Upon GA application it is ubiquitinated, leading to its subsequent degradation.

It localises to the nucleus. Functionally, probable transcriptional regulator that acts as a repressor of the gibberellin (GA) signaling pathway. Probably acts by participating in large multiprotein complexes that represses transcription of GA-inducible genes. Upon GA application, it is degraded by the proteasome, allowing the GA signaling pathway. This Cucurbita maxima (Pumpkin) protein is DELLA protein GAIP-B (GAIPB).